The primary structure comprises 191 residues: Probable nicotinate-nucleotide adenylyltransferase (191 aa).

The protein belongs to the NadD family.

The catalysed reaction is nicotinate beta-D-ribonucleotide + ATP + H(+) = deamido-NAD(+) + diphosphate. It functions in the pathway cofactor biosynthesis; NAD(+) biosynthesis; deamido-NAD(+) from nicotinate D-ribonucleotide: step 1/1. In terms of biological role, catalyzes the reversible adenylation of nicotinate mononucleotide (NaMN) to nicotinic acid adenine dinucleotide (NaAD). In Staphylococcus epidermidis (strain ATCC 12228 / FDA PCI 1200), this protein is Probable nicotinate-nucleotide adenylyltransferase.